The sequence spans 107 residues: Thiosulfate sulfurtransferase GlpE (107 aa).

The 89-residue stretch at 19–107 (KDHNARMVDI…WNKAGLPVEK (89 aa)) folds into the Rhodanese domain. The active-site Cysteine persulfide intermediate is cysteine 67.

It belongs to the GlpE family.

The protein localises to the cytoplasm. The enzyme catalyses thiosulfate + hydrogen cyanide = thiocyanate + sulfite + 2 H(+). The catalysed reaction is thiosulfate + [thioredoxin]-dithiol = [thioredoxin]-disulfide + hydrogen sulfide + sulfite + 2 H(+). Functionally, transferase that catalyzes the transfer of sulfur from thiosulfate to thiophilic acceptors such as cyanide or dithiols. May function in a CysM-independent thiosulfate assimilation pathway by catalyzing the conversion of thiosulfate to sulfite, which can then be used for L-cysteine biosynthesis. The polypeptide is Thiosulfate sulfurtransferase GlpE (Aliivibrio salmonicida (strain LFI1238) (Vibrio salmonicida (strain LFI1238))).